The chain runs to 63 residues: Large ribosomal subunit protein bL28 (63 aa).

Belongs to the bacterial ribosomal protein bL28 family.

The polypeptide is Large ribosomal subunit protein bL28 (Symbiobacterium thermophilum (strain DSM 24528 / JCM 14929 / IAM 14863 / T)).